The sequence spans 487 residues: Betaine aldehyde dehydrogenase (487 aa).

The K(+) site is built by isoleucine 27 and aspartate 93. 149–151 (GAW) provides a ligand contact to NAD(+). Lysine 161 acts as the Charge relay system in catalysis. Residues 175-178 (KPSE) and 228-231 (SVPT) each bind NAD(+). Position 243 (leucine 243) interacts with K(+). Glutamate 249 (proton acceptor) is an active-site residue. 3 residues coordinate NAD(+): glycine 251, cysteine 283, and glutamate 384. The Nucleophile role is filled by cysteine 283. Position 283 is a cysteine sulfenic acid (-SOH) (cysteine 283). Residues lysine 454 and glycine 457 each coordinate K(+). The active-site Charge relay system is the glutamate 461.

This sequence belongs to the aldehyde dehydrogenase family. In terms of assembly, dimer of dimers. It depends on K(+) as a cofactor.

The enzyme catalyses betaine aldehyde + NAD(+) + H2O = glycine betaine + NADH + 2 H(+). It participates in amine and polyamine biosynthesis; betaine biosynthesis via choline pathway; betaine from betaine aldehyde: step 1/1. Functionally, involved in the biosynthesis of the osmoprotectant glycine betaine. Catalyzes the irreversible oxidation of betaine aldehyde to the corresponding acid. The chain is Betaine aldehyde dehydrogenase from Brucella abortus (strain S19).